The chain runs to 40 residues: Photosystem II reaction center protein J (40 aa).

Residues 8 to 28 form a helical membrane-spanning segment; sequence IPLCLIGTVAGIAVIGLVGVF.

The protein belongs to the PsbJ family. As to quaternary structure, PSII is composed of 1 copy each of membrane proteins PsbA, PsbB, PsbC, PsbD, PsbE, PsbF, PsbH, PsbI, PsbJ, PsbK, PsbL, PsbM, PsbT, PsbX, PsbY, PsbZ, Psb30/Ycf12, at least 3 peripheral proteins of the oxygen-evolving complex and a large number of cofactors. It forms dimeric complexes.

It is found in the plastid. The protein resides in the chloroplast thylakoid membrane. Its function is as follows. One of the components of the core complex of photosystem II (PSII). PSII is a light-driven water:plastoquinone oxidoreductase that uses light energy to abstract electrons from H(2)O, generating O(2) and a proton gradient subsequently used for ATP formation. It consists of a core antenna complex that captures photons, and an electron transfer chain that converts photonic excitation into a charge separation. The polypeptide is Photosystem II reaction center protein J (Triticum aestivum (Wheat)).